Here is a 424-residue protein sequence, read N- to C-terminus: PDZ and LIM domain protein 7 (424 aa).

The 85-residue stretch at 1-85 folds into the PDZ domain; it reads MDSFKVVLEG…RLSLSLSRAQ (85 aa). Phosphoserine is present on Ser-78. The segment covering 81-98 has biased composition (polar residues); sequence LSRAQPAQSKPQKVQTPD. The disordered stretch occupies residues 81–221; sequence LSRAQPAQSK…HTQPATPTPM (141 aa). At Thr-96 the chain carries Phosphothreonine. The segment covering 110–123 has biased composition (basic and acidic residues); sequence SKQRLMEDTEDWRP. Residues 174 to 187 show a composition bias toward pro residues; it reads EPWPGPTTPSPTSR. Residues 204-221 are compositionally biased toward polar residues; it reads KTSTVLTRHTQPATPTPM. LIM zinc-binding domains are found at residues 247–305, 306–365, and 366–424; these read PVCH…VRYA, PSCA…MFGT, and KCRG…FSHV.

Binds via its LIM zinc-binding 3 domain (LIM 3) domain to endocytic codes of INSR, but not with those of IGF1R, LDLR, TFRC, or EGFR. Interacts with various PKC isoforms through the LIM zinc-binding domains. Binds to RET in a phosphorylation-independent manner via its LIM zinc-binding 2 domain (LIM 2). Probably part of a complex with SHC and the RET dimer. Interacts with TPM2, TBX4 and TBX5.

The protein localises to the cytoplasm. It localises to the cytoskeleton. May function as a scaffold on which the coordinated assembly of proteins can occur. May play a role as an adapter that, via its PDZ domain, localizes LIM-binding proteins to actin filaments of both skeletal muscle and nonmuscle tissues. Involved in both of the two fundamental mechanisms of bone formation, direct bone formation (e.g. embryonic flat bones mandible and cranium), and endochondral bone formation (e.g. embryonic long bone development). Plays a role during fracture repair. Involved in BMP6 signaling pathway. The polypeptide is PDZ and LIM domain protein 7 (PDLIM7) (Bos taurus (Bovine)).